Consider the following 146-residue polypeptide: Late protein H7 (146 aa).

The chain crosses the membrane as a helical span at residues 10 to 32 (LAMTAFFGELNTLDIMALIMSIF).

This sequence belongs to the chordopoxvirinae H7 family.

The protein resides in the membrane. Functionally, contributes to the formation of crescents and immature virions (IV). In Vaccinia virus (strain Tian Tan) (VACV), this protein is Late protein H7.